We begin with the raw amino-acid sequence, 304 residues long: Putative S-adenosyl-L-methionine-dependent methyltransferase MUL_0816 (304 aa).

Residues Asp130 and 159 to 160 (DL) contribute to the S-adenosyl-L-methionine site.

The protein belongs to the UPF0677 family.

In terms of biological role, exhibits S-adenosyl-L-methionine-dependent methyltransferase activity. The sequence is that of Putative S-adenosyl-L-methionine-dependent methyltransferase MUL_0816 from Mycobacterium ulcerans (strain Agy99).